Reading from the N-terminus, the 406-residue chain is 4-hydroxy-3-methylbut-2-en-1-yl diphosphate synthase (ferredoxin) (406 aa).

The [4Fe-4S] cluster site is built by Cys315, Cys318, Cys349, and Glu356.

Belongs to the IspG family. It depends on [4Fe-4S] cluster as a cofactor.

It catalyses the reaction (2E)-4-hydroxy-3-methylbut-2-enyl diphosphate + 2 oxidized [2Fe-2S]-[ferredoxin] + H2O = 2-C-methyl-D-erythritol 2,4-cyclic diphosphate + 2 reduced [2Fe-2S]-[ferredoxin] + H(+). Its pathway is isoprenoid biosynthesis; isopentenyl diphosphate biosynthesis via DXP pathway; isopentenyl diphosphate from 1-deoxy-D-xylulose 5-phosphate: step 5/6. Functionally, converts 2C-methyl-D-erythritol 2,4-cyclodiphosphate (ME-2,4cPP) into 1-hydroxy-2-methyl-2-(E)-butenyl 4-diphosphate. The sequence is that of 4-hydroxy-3-methylbut-2-en-1-yl diphosphate synthase (ferredoxin) from Trichodesmium erythraeum (strain IMS101).